Reading from the N-terminus, the 353-residue chain is Protein-glutamate methylesterase/protein-glutamine glutaminase (353 aa).

A Response regulatory domain is found at 6–123 (RVLVIDDSAL…ARGLKAMLSE (118 aa)). Aspartate 57 is subject to 4-aspartylphosphate. The region spanning 159-351 (AESTDKVIAI…PRIVDLLSER (193 aa)) is the CheB-type methylesterase domain. Active-site residues include serine 171, histidine 197, and aspartate 293.

This sequence belongs to the CheB family. In terms of processing, phosphorylated by CheA. Phosphorylation of the N-terminal regulatory domain activates the methylesterase activity.

It localises to the cytoplasm. It catalyses the reaction [protein]-L-glutamate 5-O-methyl ester + H2O = L-glutamyl-[protein] + methanol + H(+). The enzyme catalyses L-glutaminyl-[protein] + H2O = L-glutamyl-[protein] + NH4(+). In terms of biological role, involved in chemotaxis. Part of a chemotaxis signal transduction system that modulates chemotaxis in response to various stimuli. Catalyzes the demethylation of specific methylglutamate residues introduced into the chemoreceptors (methyl-accepting chemotaxis proteins or MCP) by CheR. Also mediates the irreversible deamidation of specific glutamine residues to glutamic acid. This is Protein-glutamate methylesterase/protein-glutamine glutaminase from Syntrophotalea carbinolica (strain DSM 2380 / NBRC 103641 / GraBd1) (Pelobacter carbinolicus).